We begin with the raw amino-acid sequence, 275 residues long: Large ribosomal subunit protein uL2c (275 aa).

Disordered stretches follow at residues 29–60 and 225–252; these read PEKS…GHKR and MNPV…PWGH. A compositionally biased stretch (basic residues) spans 51–60; the sequence is SRHRGGGHKR.

It belongs to the universal ribosomal protein uL2 family. As to quaternary structure, part of the 50S ribosomal subunit.

It is found in the plastid. The protein localises to the chloroplast. In Chlorokybus atmophyticus (Soil alga), this protein is Large ribosomal subunit protein uL2c (rpl2).